Reading from the N-terminus, the 262-residue chain is WUSCHEL-related homeobox 11 (262 aa).

The segment covering 1 to 11 (MDGGHSPDRHA) has biased composition (basic and acidic residues). Disordered stretches follow at residues 1–21 (MDGGHSPDRHAAAAAGEPVRS) and 79–115 (RRRQRQLQAQAQAAAAAASSGSPPTASSGGLAPGHAG). A DNA-binding region (homeobox) is located at residues 18-82 (PVRSRWTPKP…NRRSRSRRRQ (65 aa)). A compositionally biased stretch (low complexity) spans 84–112 (QLQAQAQAAAAAASSGSPPTASSGGLAPG).

This sequence belongs to the WUS homeobox family. As to quaternary structure, interacts with ERF3.

It is found in the nucleus. In terms of biological role, transcription factor which may be involved in developmental processes. Promotes the development of crown roots (both initiation and elongation), main components of the fibrous root system, by regulating the expression of genes required for crown root development and hormone-responsive genes involved in cytokinin (e.g. RR1, RR2, RR3 and RR4) and auxin (e.g. IAA5, IAA11, IAA23 and IAA31) signaling. In Oryza sativa subsp. indica (Rice), this protein is WUSCHEL-related homeobox 11.